Reading from the N-terminus, the 510-residue chain is NAD(P)H-quinone oxidoreductase subunit 2 B, chloroplastic (510 aa).

The next 12 membrane-spanning stretches (helical) occupy residues 24–44 (LLLFHGSFIFPECILIFGLIL), 57–77 (IPWLYFISSTSLVMSITALLF), 99–119 (IFQFLILLCSTLCIPLSVEYI), 124–144 (MAITEFLLFVLTATLGGMFLC), 183–203 (YLLMGGASSSILVHGFSWLYG), 227–247 (PGISIALISITVGIGFKLSPA), 295–315 (WHLLLEILAILSMILGNLIAI), 323–343 (MLAYSSIGQIGYVIIGIIVGD), 347–367 (GYASMITYMLFYISMNLGTFA), 395–415 (ALSSALCLLSLGGLPPLAGFF), 418–438 (LHLFWCGWQAGLYFLVSIGLL), and 484–504 (MIVCVIASTIPGISMNPIIAI).

This sequence belongs to the complex I subunit 2 family. In terms of assembly, NDH is composed of at least 16 different subunits, 5 of which are encoded in the nucleus.

The protein resides in the plastid. Its subcellular location is the chloroplast thylakoid membrane. The enzyme catalyses a plastoquinone + NADH + (n+1) H(+)(in) = a plastoquinol + NAD(+) + n H(+)(out). It carries out the reaction a plastoquinone + NADPH + (n+1) H(+)(in) = a plastoquinol + NADP(+) + n H(+)(out). NDH shuttles electrons from NAD(P)H:plastoquinone, via FMN and iron-sulfur (Fe-S) centers, to quinones in the photosynthetic chain and possibly in a chloroplast respiratory chain. The immediate electron acceptor for the enzyme in this species is believed to be plastoquinone. Couples the redox reaction to proton translocation, and thus conserves the redox energy in a proton gradient. The protein is NAD(P)H-quinone oxidoreductase subunit 2 B, chloroplastic of Calycanthus floridus var. glaucus (Eastern sweetshrub).